The primary structure comprises 428 residues: Putative FBD-associated F-box protein At5g56390 (428 aa).

One can recognise an F-box domain in the interval 2–50; it reads DKISQLHDELLLGILSLLPNAKDVVATMVLSKRWRYLWMMVPSLVYDDS. An FBD domain is found at 344-394; it reads CWNETSLVPEYLLPSLETFEWVDYEGTKTEKQVVAFILRIASCLKQATIVS.

This Arabidopsis thaliana (Mouse-ear cress) protein is Putative FBD-associated F-box protein At5g56390.